The sequence spans 362 residues: Mortality factor 4-like protein 1 (362 aa).

Positions 12-51 (QEGERVLCFHGPLLYEAKCVKVAIKDKQVKYFIHYSGWNK) constitute a Tudor-knot domain. The tract at residues 26–62 (YEAKCVKVAIKDKQVKYFIHYSGWNKKSAVRPRRSEK) is interaction with KAT8. Positions 113–182 (RELQKANQEQ…RKKRARVDPT (70 aa)) are disordered. The tract at residues 133-266 (PGKKTSGLQQ…VAGIKEYFNV (134 aa)) is sufficient for interaction with SIN3A. Residues 135-146 (KKTSGLQQKNVE) carry the Nuclear localization signal motif. At lysine 143 the chain carries N6-acetyllysine. The interval 164–230 (STSETPQPPR…FYLPAKKNVD (67 aa)) is interaction with RB1-1. Residues 188-342 (TFMNRVEVKV…FLKYLAKNSA (155 aa)) are sufficient for interaction with PHF12. Residues 191–362 (NRVEVKVKIP…APPEYHRKAV (172 aa)) enclose the MRG domain. The segment at 323-344 (LALLLNYLHDFLKYLAKNSATL) is interaction with RB1-2.

Component of the NuA4 histone acetyltransferase complex which contains the catalytic subunit KAT5/TIP60 and the subunits EP400, TRRAP/PAF400, BRD8/SMAP, EPC1, DMAP1/DNMAP1, RUVBL1/TIP49, RUVBL2, ING3, actin, ACTL6A/BAF53A, MORF4L1/MRG15, MORF4L2/MRGX, MRGBP, YEATS4/GAS41, VPS72/YL1 and MEAF6. The NuA4 complex interacts with MYC and the adenovirus E1A protein. MORF4L1 may also participate in the formation of NuA4 related complexes which lack the KAT5/TIP60 catalytic subunit, but which include the SWI/SNF related protein SRCAP. Component of the mSin3A histone deacetylase complex, which includes SIN3A, HDAC2, ARID4B, MORF4L1, RBBP4/RbAp48, and RBBP7/RbAp46. May also interact with PHF12 and one or more as yet undefined members of the TLE (transducin-like enhancer of split) family of transcriptional repressors. Component of the SIN3B complex, which includes SIN3B, HDAC2 or HDAC1, PHF12 and MORF4L1. Interacts with RB1 and KAT8. Interacts with the N-terminus of MRFAP1. Found in a complex composed of MORF4L1, MRFAP1 and RB1. Interacts with the entire BRCA complex, which contains BRCA1, PALB2, BRCA2 and RAD51. Interacts with PALB2. Forms a complex with MSL1 and NUPR1.

It is found in the nucleus. Component of the NuA4 histone acetyltransferase (HAT) complex which is involved in transcriptional activation of select genes principally by acetylation of nucleosomal histones H4 and H2A. This modification may both alter nucleosome - DNA interactions and promote interaction of the modified histones with other proteins which positively regulate transcription. This complex may be required for the activation of transcriptional programs associated with oncogene and proto-oncogene mediated growth induction, tumor suppressor mediated growth arrest and replicative senescence, apoptosis, and DNA repair. The NuA4 complex ATPase and helicase activities seem to be, at least in part, contributed by the association of RUVBL1 and RUVBL2 with EP400. NuA4 may also play a direct role in DNA repair when directly recruited to sites of DNA damage. As part of the SIN3B complex represses transcription and counteracts the histone acetyltransferase activity of EP300 through the recognition H3K27ac marks by PHF12 and the activity of the histone deacetylase HDAC2. SIN3B complex is recruited downstream of the constitutively active genes transcriptional start sites through interaction with histones and mitigates histone acetylation and RNA polymerase II progression within transcribed regions contributing to the regulation of transcription. Required for homologous recombination repair (HRR) and resistance to mitomycin C (MMC). Involved in the localization of PALB2, BRCA2 and RAD51, but not BRCA1, to DNA-damage foci. This chain is Mortality factor 4-like protein 1, found in Homo sapiens (Human).